The following is a 142-amino-acid chain: Transcription antitermination protein NusB (142 aa).

It belongs to the NusB family.

Functionally, involved in transcription antitermination. Required for transcription of ribosomal RNA (rRNA) genes. Binds specifically to the boxA antiterminator sequence of the ribosomal RNA (rrn) operons. The protein is Transcription antitermination protein NusB of Borreliella burgdorferi (strain ATCC 35210 / DSM 4680 / CIP 102532 / B31) (Borrelia burgdorferi).